Here is a 306-residue protein sequence, read N- to C-terminus: MQTPGLPEEKPAQGCPFGHGAVASSVATPAADSGDGWHDAQLDFSESMSYGDYLSLGTVLDAQHPLSPDHNEMLFIIQHQTSELWMKLALYELRAALQAVHRDELPPAFKMLARVSRIMEQLVQAWSVLATMTPSEYTAMRPYLGSSSGFQSYQYRQIEFLLGNKNEQMLKPHAHRADVLAEVKASLEAPSFYDEVVRLLARRGFAISAARLERDWTQPTVHDASVEAAWLEVYRNPSQHWELYEMAEELVDLEDAFRQWRFRHVTTVERIIGFKQGTGGTSGATYLRKMLDVVLFPELWHVRTML.

Residues 75–79, tyrosine 137, and arginine 141 contribute to the substrate site; that span reads FIIQH. Heme is bound at residue histidine 264. Threonine 278 lines the substrate pocket.

The protein belongs to the tryptophan 2,3-dioxygenase family. In terms of assembly, homotetramer. The cofactor is heme.

It carries out the reaction L-tryptophan + O2 = N-formyl-L-kynurenine. It functions in the pathway amino-acid degradation; L-tryptophan degradation via kynurenine pathway; L-kynurenine from L-tryptophan: step 1/2. Heme-dependent dioxygenase that catalyzes the oxidative cleavage of the L-tryptophan (L-Trp) pyrrole ring and converts L-tryptophan to N-formyl-L-kynurenine. Catalyzes the oxidative cleavage of the indole moiety. The polypeptide is Tryptophan 2,3-dioxygenase (Paraburkholderia phytofirmans (strain DSM 17436 / LMG 22146 / PsJN) (Burkholderia phytofirmans)).